The chain runs to 133 residues: Large ribosomal subunit protein bL20 (133 aa).

It belongs to the bacterial ribosomal protein bL20 family.

Functionally, binds directly to 23S ribosomal RNA and is necessary for the in vitro assembly process of the 50S ribosomal subunit. It is not involved in the protein synthesizing functions of that subunit. The sequence is that of Large ribosomal subunit protein bL20 from Bartonella bacilliformis (strain ATCC 35685 / KC583 / Herrer 020/F12,63).